The primary structure comprises 313 residues: tRNA dimethylallyltransferase (313 aa).

11–18 is a binding site for ATP; the sequence is GPTACGKT. 13-18 contacts substrate; that stretch reads TACGKT. 3 interaction with substrate tRNA regions span residues 36–39, 160–164, and 243–248; these read DSAL, QRIER, and RCVGYR.

This sequence belongs to the IPP transferase family. Monomer. Mg(2+) serves as cofactor.

The enzyme catalyses adenosine(37) in tRNA + dimethylallyl diphosphate = N(6)-dimethylallyladenosine(37) in tRNA + diphosphate. Its function is as follows. Catalyzes the transfer of a dimethylallyl group onto the adenine at position 37 in tRNAs that read codons beginning with uridine, leading to the formation of N6-(dimethylallyl)adenosine (i(6)A). This chain is tRNA dimethylallyltransferase, found in Neisseria meningitidis serogroup C (strain 053442).